The chain runs to 208 residues: Meiotically up-regulated gene 9 protein (208 aa).

The tract at residues 77-114 (VPASNEKAARVSNLKTVPSLKRENKEVNANSKPPVKQQ) is disordered.

Its function is as follows. Has a role in meiosis. The chain is Meiotically up-regulated gene 9 protein (mug9) from Schizosaccharomyces pombe (strain 972 / ATCC 24843) (Fission yeast).